The sequence spans 370 residues: Probable protein phosphatase 2C 67 (370 aa).

Residues 35 to 344 (TFGEFSMAMI…DDITVIVVYL (310 aa)) form the PPM-type phosphatase domain. Mn(2+) is bound by residues D77, G78, D276, and D335.

This sequence belongs to the PP2C family. Interacts with SAUR19. Interacts with AHA2 at the plasma membrane. The cofactor is Mg(2+). It depends on Mn(2+) as a cofactor.

It is found in the cell membrane. The enzyme catalyses O-phospho-L-seryl-[protein] + H2O = L-seryl-[protein] + phosphate. The catalysed reaction is O-phospho-L-threonyl-[protein] + H2O = L-threonyl-[protein] + phosphate. In terms of biological role, dephosphorylates and represses plasma membrane H(+)-ATPases (PM H(+)-ATPases, e.g. AHA1 and AHA2), thus influencing negatively plant growth and fitness. Promotes the apical hook maintenance of etiolated seedlings. The protein is Probable protein phosphatase 2C 67 of Arabidopsis thaliana (Mouse-ear cress).